Here is a 510-residue protein sequence, read N- to C-terminus: NAD(P)H-quinone oxidoreductase subunit 2 A, chloroplastic (510 aa).

13 helical membrane-spanning segments follow: residues 24-44 (LLLF…GLIL), 57-77 (IPWL…ALLF), 99-119 (IFQF…VEYI), 124-144 (MAIT…MFLC), 149-169 (LITI…LSGY), 183-203 (YLLM…WLYG), 227-247 (PGIS…LSLA), 295-315 (WHLL…LIAI), 323-343 (MLAY…IVGD), 354-374 (YMLF…SFGL), 395-415 (ALSL…AGFF), 418-438 (LHLF…IGLL), and 484-504 (MIVC…IIAI).

Belongs to the complex I subunit 2 family. In terms of assembly, NDH is composed of at least 16 different subunits, 5 of which are encoded in the nucleus.

The protein localises to the plastid. Its subcellular location is the chloroplast thylakoid membrane. It catalyses the reaction a plastoquinone + NADH + (n+1) H(+)(in) = a plastoquinol + NAD(+) + n H(+)(out). The catalysed reaction is a plastoquinone + NADPH + (n+1) H(+)(in) = a plastoquinol + NADP(+) + n H(+)(out). NDH shuttles electrons from NAD(P)H:plastoquinone, via FMN and iron-sulfur (Fe-S) centers, to quinones in the photosynthetic chain and possibly in a chloroplast respiratory chain. The immediate electron acceptor for the enzyme in this species is believed to be plastoquinone. Couples the redox reaction to proton translocation, and thus conserves the redox energy in a proton gradient. This is NAD(P)H-quinone oxidoreductase subunit 2 A, chloroplastic from Ranunculus macranthus (Large buttercup).